A 150-amino-acid polypeptide reads, in one-letter code: Large ribosomal subunit protein uL15 (150 aa).

Residues 1-57 (MTLRLESLKPNKGARRRKLRKGRGIAAGQGASCGFGMRGQKSRSGRPTRPGFEGGQM) are disordered. Residues 12–23 (KGARRRKLRKGR) are compositionally biased toward basic residues. Over residues 25–37 (IAAGQGASCGFGM) the composition is skewed to gly residues.

The protein belongs to the universal ribosomal protein uL15 family. As to quaternary structure, part of the 50S ribosomal subunit.

Binds to the 23S rRNA. This is Large ribosomal subunit protein uL15 from Synechococcus sp. (strain CC9311).